The sequence spans 366 residues: Cyanide hydratase (366 aa).

A CN hydrolase domain is found at 6–285 (YKAAAVTSEP…DGLMFVDIDL (280 aa)). The Proton acceptor role is filled by E46. K128 is an active-site residue. C163 functions as the Nucleophile in the catalytic mechanism.

This sequence belongs to the carbon-nitrogen hydrolase superfamily. Nitrilase family. As to quaternary structure, oligomer of dimers, forming left-handed helical fibers.

It catalyses the reaction formamide = hydrogen cyanide + H2O. Catalyzes the hydration of cyanide to formamide. Degradation of cyanide may be important for plant pathogenic fungi in infection of cyanogenic plants. Can also transform some nitriles like 2-cyanopyridine and fumaronitrile. This is Cyanide hydratase from Pyrenophora teres f. teres (strain 0-1) (Barley net blotch fungus).